A 196-amino-acid chain; its full sequence is HTH-type transcriptional regulator Hpr (196 aa).

Positions 13 to 157 (SIVFSHKMAL…LICIVRHIYG (145 aa)) constitute an HTH marR-type domain. Positions 63-86 (ISDIASHGVMHVSTAFNFSKKLEA) form a DNA-binding region, H-T-H motif.

In terms of assembly, homodimer.

In terms of biological role, negative regulator of protease production and sporulation. In Shouchella clausii (strain KSM-K16) (Alkalihalobacillus clausii), this protein is HTH-type transcriptional regulator Hpr.